A 216-amino-acid polypeptide reads, in one-letter code: Thiopurine S-methyltransferase (216 aa).

4 residues coordinate S-adenosyl-L-methionine: Trp11, Leu46, Glu67, and Arg122.

Belongs to the class I-like SAM-binding methyltransferase superfamily. TPMT family.

The protein localises to the cytoplasm. The enzyme catalyses S-adenosyl-L-methionine + a thiopurine = S-adenosyl-L-homocysteine + a thiopurine S-methylether.. The sequence is that of Thiopurine S-methyltransferase from Vibrio campbellii (strain ATCC BAA-1116).